The sequence spans 115 residues: Protein E6A (115 aa).

The signal sequence occupies residues Met-1–Gly-25.

This chain is Protein E6A (12), found in Equine herpesvirus 2 (strain 86/87) (EHV-2).